Reading from the N-terminus, the 375-residue chain is Alcohol dehydrogenase 6 (375 aa).

Ser-23 is subject to Phosphoserine. The Zn(2+) site is built by Cys-47, His-69, Cys-99, Cys-102, Cys-105, Cys-113, and Cys-175. NAD(+)-binding positions include 200–205 (GLGGVG), Asp-224, Lys-229, 293–295 (VGL), and Arg-370.

Belongs to the zinc-containing alcohol dehydrogenase family. Class-V subfamily. Dimer. The cofactor is Zn(2+).

The protein resides in the cytoplasm. It carries out the reaction a primary alcohol + NAD(+) = an aldehyde + NADH + H(+). The enzyme catalyses a secondary alcohol + NAD(+) = a ketone + NADH + H(+). Its function is as follows. Alcohol dehydrogenase. Catalyzes the NAD-dependent oxidation of primary alcohols to the corresponding aldehydes. Oxidizes secondary alcohols to the corresponding ketones. The polypeptide is Alcohol dehydrogenase 6 (ADH6) (Pongo abelii (Sumatran orangutan)).